Consider the following 173-residue polypeptide: NADH-ubiquinone oxidoreductase chain 6 (173 aa).

The next 4 helical transmembrane spans lie at 12 to 32 (VFWL…VSLV), 47 to 67 (GSFL…VIFA), 94 to 114 (VVLA…GECG), and 142 to 162 (GALM…LVLV).

This sequence belongs to the complex I subunit 6 family.

It localises to the mitochondrion membrane. It catalyses the reaction a ubiquinone + NADH + 5 H(+)(in) = a ubiquinol + NAD(+) + 4 H(+)(out). In terms of biological role, core subunit of the mitochondrial membrane respiratory chain NADH dehydrogenase (Complex I) that is believed to belong to the minimal assembly required for catalysis. Complex I functions in the transfer of electrons from NADH to the respiratory chain. The immediate electron acceptor for the enzyme is believed to be ubiquinone. The chain is NADH-ubiquinone oxidoreductase chain 6 (MT-ND6) from Pelomedusa subrufa (African side-necked turtle).